Consider the following 93-residue polypeptide: Neurophysin 1 (93 aa).

7 disulfides stabilise this stretch: Cys-10–Cys-54, Cys-13–Cys-27, Cys-21–Cys-44, Cys-28–Cys-34, Cys-61–Cys-74, Cys-68–Cys-86, and Cys-75–Cys-80.

The protein belongs to the vasopressin/oxytocin family.

The protein localises to the secreted. Its function is as follows. Neurophysin 1 specifically binds oxytocin. In Anser anser anser (Western greylag goose), this protein is Neurophysin 1.